Here is a 233-residue protein sequence, read N- to C-terminus: Lipoprotein-releasing system ATP-binding protein LolD (233 aa).

Residues 6 to 233 (LQCDNLCKRY…TAELSLMGAE (228 aa)) form the ABC transporter domain. 42-49 (GSSGSGKS) contacts ATP.

The protein belongs to the ABC transporter superfamily. Lipoprotein translocase (TC 3.A.1.125) family. The complex is composed of two ATP-binding proteins (LolD) and two transmembrane proteins (LolC and LolE).

The protein localises to the cell inner membrane. Functionally, part of the ABC transporter complex LolCDE involved in the translocation of mature outer membrane-directed lipoproteins, from the inner membrane to the periplasmic chaperone, LolA. Responsible for the formation of the LolA-lipoprotein complex in an ATP-dependent manner. This is Lipoprotein-releasing system ATP-binding protein LolD from Shigella dysenteriae serotype 1 (strain Sd197).